We begin with the raw amino-acid sequence, 230 residues long: DNA repair protein RecO (230 aa).

This sequence belongs to the RecO family.

In terms of biological role, involved in DNA repair and RecF pathway recombination. The polypeptide is DNA repair protein RecO (Pseudoalteromonas translucida (strain TAC 125)).